The chain runs to 558 residues: Phosphatase and actin regulator 3 (558 aa).

Polar residues predominate over residues 1–11 (MAASEDGSSCL). Disordered stretches follow at residues 1 to 69 (MAAS…KLAT), 81 to 288 (KKKN…RPLP), and 300 to 366 (LATK…ENLM). The segment covering 18-33 (QSDPSFLSDSSATSTD) has biased composition (low complexity). A Phosphothreonine modification is found at Thr-69. An RPEL 1 repeat occupies 92-117 (SALEKKMAGRQGREELIKQGLLEMME). The segment covering 94 to 108 (LEKKMAGRQGREELI) has biased composition (basic and acidic residues). Polar residues predominate over residues 144-169 (ETLTSEGAQPGSPSASGTDQVSQDEL). The span at 228 to 239 (PSPPLLPTPPPK) shows a compositional bias: pro residues. Position 229 is a phosphoserine (Ser-229). Position 235 is a phosphothreonine (Thr-235). Composition is skewed to basic and acidic residues over residues 300–341 (LATK…RDEA) and 354–363 (ATKDSEENKE). RPEL repeat units lie at residues 400 to 425 (ELLA…PRRT), 438 to 463 (MKLS…KQRN), and 476 to 501 (QRLT…IRFS). The stretch at 449 to 485 (AVEELERRNILKQRNDQTEQEERREIKQRLTRKLNQR) forms a coiled coil.

The protein belongs to the phosphatase and actin regulator family. As to quaternary structure, binds PPP1CA and actin; thus inhibiting the protein phosphatase 1 (PP1) activity.

The protein localises to the nucleus matrix. This chain is Phosphatase and actin regulator 3 (Phactr3), found in Mus musculus (Mouse).